The following is a 172-amino-acid chain: MEPWAMRALDFADESGSVSCKDMHLLLWLQKRIEMHKAEQCEEEEAMTPRPTKARAPLPSAYVPPLSLPPCPRERLKGMLKEIKPRLSRNCREDPQGCLLNLLLQSHSRSPERPLQRRERRYLQRRREKLMLARRGITLQKMEMPKQTRHRKLKVLEMPSEVCAFLITVYFW.

The tract at residues 40–61 is disordered; the sequence is QCEEEEAMTPRPTKARAPLPSA.

In terms of tissue distribution, very high expression in prostate and prostate cancer. Faint expression in other tissues.

This chain is Putative Dresden prostate carcinoma protein 2 (HMGN2P46), found in Homo sapiens (Human).